The following is a 135-amino-acid chain: ATP synthase epsilon chain (135 aa).

It belongs to the ATPase epsilon chain family. F-type ATPases have 2 components, CF(1) - the catalytic core - and CF(0) - the membrane proton channel. CF(1) has five subunits: alpha(3), beta(3), gamma(1), delta(1), epsilon(1). CF(0) has three main subunits: a, b and c.

It is found in the cell inner membrane. Functionally, produces ATP from ADP in the presence of a proton gradient across the membrane. This is ATP synthase epsilon chain from Rhizobium etli (strain ATCC 51251 / DSM 11541 / JCM 21823 / NBRC 15573 / CFN 42).